The chain runs to 258 residues: Aspartate/glutamate leucyltransferase (258 aa).

The protein belongs to the R-transferase family. Bpt subfamily.

The protein localises to the cytoplasm. The catalysed reaction is N-terminal L-glutamyl-[protein] + L-leucyl-tRNA(Leu) = N-terminal L-leucyl-L-glutamyl-[protein] + tRNA(Leu) + H(+). It catalyses the reaction N-terminal L-aspartyl-[protein] + L-leucyl-tRNA(Leu) = N-terminal L-leucyl-L-aspartyl-[protein] + tRNA(Leu) + H(+). Functions in the N-end rule pathway of protein degradation where it conjugates Leu from its aminoacyl-tRNA to the N-termini of proteins containing an N-terminal aspartate or glutamate. The sequence is that of Aspartate/glutamate leucyltransferase from Rhizobium etli (strain ATCC 51251 / DSM 11541 / JCM 21823 / NBRC 15573 / CFN 42).